Reading from the N-terminus, the 808-residue chain is Aminotransferase ALT4 (808 aa).

Belongs to the class-II pyridoxal-phosphate-dependent aminotransferase family. BioF subfamily. Requires pyridoxal 5'-phosphate as cofactor.

Its pathway is mycotoxin biosynthesis. Aminotransferase; part of the gene cluster that mediates the biosynthesis of the host-selective toxins (HSTs) AAL-toxins, sphinganine-analog mycotoxins responsible for Alternaria stem canker on tomato by the tomato pathotype. The biosynthesis starts with the polyketide synthase ALT1-catalyzed C-16 carbon chain assembly from one starter acetyl-CoA unit with malonyl-CoA extender units. ALT1 also selectively transfers methyl groups at the first and the third cycle of chain elongation for AAL toxin. The C-16 polyketide chain is released from the enzyme by a nucleophilic attack of a carbanion, which is derived from R-carbon of glycin by decarboxylation, on the carbonyl carbon of polyketide acyl chain. This step is probably catalyzed by a pyridoxal 5'-phosphate-dependent aminoacyl transferase ALT4. The respective functions of the other enzymes encoded by the cluster have still to be elucidated. The sphingosine N-acyltransferase-like protein ALT7 seems not to act as a resistance/self-tolerance factor against the toxin in the toxin biosynthetic gene cluster, contrary to what is expected. This is Aminotransferase ALT4 from Alternaria alternata (Alternaria rot fungus).